Reading from the N-terminus, the 193-residue chain is CD70 antigen (193 aa).

Topologically, residues 1 to 17 (MPEEGSGCSVRRRPYGC) are cytoplasmic. Residues 18–38 (VLRAALVPLVAGLVICLVVCI) form a helical; Signal-anchor for type II membrane protein membrane-spanning segment. At 39 to 193 (QRFAQAQQQL…TFFGVQWVRP (155 aa)) the chain is on the extracellular side. In terms of domain architecture, THD spans 56–191 (DVAELQLNHT…DETFFGVQWV (136 aa)). N-linked (GlcNAc...) asparagine glycosylation is present at Asn63. 2 disulfides stabilise this stretch: Cys115-Cys151 and Cys133-Cys168. Asn170 carries N-linked (GlcNAc...) asparagine glycosylation.

The protein belongs to the tumor necrosis factor family. Homotrimer. Post-translationally, N-glycosylated.

It localises to the cell membrane. Expressed at the plasma membrane of B cells, it is the ligand of the CD27 receptor which is specifically expressed at the surface of T cells. The CD70-CD27 signaling pathway mediates antigen-specific T cell activation and expansion which in turn provides immune surveillance of B cells. This chain is CD70 antigen, found in Homo sapiens (Human).